The primary structure comprises 76 residues: Gas vesicle protein A1 (76 aa).

Binds to GvpF1 regions lie at residues 1 to 22 (MAQP…KGVV) and 2 to 43 (AQPD…EARV). An alpha helix 1 region spans residues 9–19 (LAEVLDRVLDK). Residues 23-31 (VDVWARVSL) are beta-strand 1. The segment at 32–34 (VGI) is beta turn. The tract at residues 35-43 (EILTVEARV) is beta-strand 2. The tract at residues 48–67 (VDTFLHYAEEIAKIEQAELT) is alpha helix 2.

Belongs to the gas vesicle GvpA family. Major component of the gas vesicle shell which is 2 nm thick and consists of a single layer of the protein. It forms 4.6 nm-wide ribs nearly perpendicular to the long axis of the vesicle. Modeled as antiparallel homodimers. The ribs form a low-pitch helix rather than a stack of hoops. Interacts with GvpF1 via its N-terminus (residues 1-43) in early growth stages, none of the other GvpG1 to GvpM1 proteins were seen to directly bind GvpA1 in H.volcanii experiments. Might interact with GvpJ1. Might interact with GvpG1, GvpH1, GvpJ1, GvpM1, GvpN1 and GvpO1.

The protein resides in the gas vesicle shell. Gas vesicles are hollow, gas filled proteinaceous nanostructures found in several microbial planktonic microorganisms. They allow positioning of halobacteria at the optimal depth for growth in the poorly aerated shallow brine pools of their habitat. GvpA forms the protein shell. The critical collapse pressure (CCP) of p-vac gas vesicles is 0.66 MPa; mutating residues in p-gvpA to those found in c-gvpA increases the CCP. These residues partially and independently control the width and strength of gas vesicles. In stationary phase gas vesicles, about 30 times more GvpA1 is found than GvpA2. Its function is as follows. Expression of a 9.5 kb p-vac DNA fragment containing 2 divergently transcribed regions (gvpD-gvpE-gvpF-gvpG-gvpH-gvpI-gvpJ-gvpK-gvpL-gvpM and gvpA-gvpC-gvpN-gvpO) allows H.volcanii to produce gas vesicles. All site-directed mutagenesis is tested in H.volcanii. A minimal gas vesicle can be made in H.volcanii by gvpA1-gvpO1 plus gvpF1-gvpG1-gvpJ1-gvpK1-gvpL1-gvpM1; lack of enough GvpJ1 prevents their formation. A similar region restores gas vesicle production in H.halobium without the p-vac locus, but it still has the c-vac locus. This chain is Gas vesicle protein A1, found in Halobacterium salinarum (strain ATCC 700922 / JCM 11081 / NRC-1) (Halobacterium halobium).